Consider the following 321-residue polypeptide: Malate dehydrogenase (321 aa).

Residues 10-15 (GSGMIG) and D34 contribute to the NAD(+) site. The substrate site is built by R83 and R89. NAD(+) is bound by residues N96 and 119-121 (ITN). Residues N121 and R152 each coordinate substrate. H176 serves as the catalytic Proton acceptor.

Belongs to the LDH/MDH superfamily. MDH type 3 family.

It carries out the reaction (S)-malate + NAD(+) = oxaloacetate + NADH + H(+). Its function is as follows. Catalyzes the reversible oxidation of malate to oxaloacetate. This is Malate dehydrogenase from Sinorhizobium fredii (strain NBRC 101917 / NGR234).